Here is a 291-residue protein sequence, read N- to C-terminus: ATP phosphoribosyltransferase (291 aa).

It belongs to the ATP phosphoribosyltransferase family. Long subfamily. Mg(2+) is required as a cofactor.

The protein localises to the cytoplasm. It carries out the reaction 1-(5-phospho-beta-D-ribosyl)-ATP + diphosphate = 5-phospho-alpha-D-ribose 1-diphosphate + ATP. Its pathway is amino-acid biosynthesis; L-histidine biosynthesis; L-histidine from 5-phospho-alpha-D-ribose 1-diphosphate: step 1/9. Feedback inhibited by histidine. Its function is as follows. Catalyzes the condensation of ATP and 5-phosphoribose 1-diphosphate to form N'-(5'-phosphoribosyl)-ATP (PR-ATP). Has a crucial role in the pathway because the rate of histidine biosynthesis seems to be controlled primarily by regulation of HisG enzymatic activity. The chain is ATP phosphoribosyltransferase from Desulfosudis oleivorans (strain DSM 6200 / JCM 39069 / Hxd3) (Desulfococcus oleovorans).